We begin with the raw amino-acid sequence, 212 residues long: ATP synthase F(0) complex subunit a (212 aa).

A run of 6 helical transmembrane segments spans residues 3 to 23 (MMGIPLILIAIFLPTLLIYTS), 58 to 78 (WAAMLMTLMIXLLSMNLLGLL), 87 to 107 (QLSMNMALAIPLWLATVLTGL), 128 to 148 (IPLLIIIETVSLFIRPLALGV), 169 to 189 (FVLLPMMTLTALSTFIVLVLL), and 192 to 212 (LEIAVAMIQAYVFTLLLTLYL).

The protein belongs to the ATPase A chain family. In terms of assembly, component of the ATP synthase complex composed at least of ATP5F1A/subunit alpha, ATP5F1B/subunit beta, ATP5MC1/subunit c (homooctomer), MT-ATP6/subunit a, MT-ATP8/subunit 8, ATP5ME/subunit e, ATP5MF/subunit f, ATP5MG/subunit g, ATP5MK/subunit k, ATP5MJ/subunit j, ATP5F1C/subunit gamma, ATP5F1D/subunit delta, ATP5F1E/subunit epsilon, ATP5PF/subunit F6, ATP5PB/subunit b, ATP5PD/subunit d, ATP5PO/subunit OSCP. ATP synthase complex consists of a soluble F(1) head domain (subunits alpha(3) and beta(3)) - the catalytic core - and a membrane F(0) domain - the membrane proton channel (subunits c, a, 8, e, f, g, k and j). These two domains are linked by a central stalk (subunits gamma, delta, and epsilon) rotating inside the F1 region and a stationary peripheral stalk (subunits F6, b, d, and OSCP). Interacts with DNAJC30; interaction is direct.

The protein resides in the mitochondrion inner membrane. The enzyme catalyses H(+)(in) = H(+)(out). Subunit a, of the mitochondrial membrane ATP synthase complex (F(1)F(0) ATP synthase or Complex V) that produces ATP from ADP in the presence of a proton gradient across the membrane which is generated by electron transport complexes of the respiratory chain. ATP synthase complex consist of a soluble F(1) head domain - the catalytic core - and a membrane F(1) domain - the membrane proton channel. These two domains are linked by a central stalk rotating inside the F(1) region and a stationary peripheral stalk. During catalysis, ATP synthesis in the catalytic domain of F(1) is coupled via a rotary mechanism of the central stalk subunits to proton translocation. With the subunit c (ATP5MC1), forms the proton-conducting channel in the F(0) domain, that contains two crucial half-channels (inlet and outlet) that facilitate proton movement from the mitochondrial intermembrane space (IMS) into the matrix. Protons are taken up via the inlet half-channel and released through the outlet half-channel, following a Grotthuss mechanism. The sequence is that of ATP synthase F(0) complex subunit a from Tropidurus hispidus (Peters' lava lizard).